We begin with the raw amino-acid sequence, 243 residues long: ATP-dependent dethiobiotin synthetase BioD (243 aa).

12 to 17 (DVGKTL) is a binding site for ATP. Thr16 serves as a coordination point for Mg(2+). Lys37 is an active-site residue. Ser41 provides a ligand contact to substrate. Residues Asp54, 115–118 (EGCG), and 179–180 (NM) contribute to the ATP site. Mg(2+) is bound by residues Asp54 and Glu115.

Belongs to the dethiobiotin synthetase family. In terms of assembly, homodimer. It depends on Mg(2+) as a cofactor.

It is found in the cytoplasm. The enzyme catalyses (7R,8S)-7,8-diammoniononanoate + CO2 + ATP = (4R,5S)-dethiobiotin + ADP + phosphate + 3 H(+). The protein operates within cofactor biosynthesis; biotin biosynthesis; biotin from 7,8-diaminononanoate: step 1/2. Its function is as follows. Catalyzes a mechanistically unusual reaction, the ATP-dependent insertion of CO2 between the N7 and N8 nitrogen atoms of 7,8-diaminopelargonic acid (DAPA, also called 7,8-diammoniononanoate) to form a ureido ring. In Caldicellulosiruptor saccharolyticus (strain ATCC 43494 / DSM 8903 / Tp8T 6331), this protein is ATP-dependent dethiobiotin synthetase BioD.